Reading from the N-terminus, the 149-residue chain is Transcriptional repressor NrdR (149 aa).

Residues 3 to 34 (CPFCSAVDTKVIDSRLVGEGSQVRRRRQCLVC) fold into a zinc finger. The ATP-cone domain maps to 49–139 (PRVIKSNEVR…VYRSFEDIRE (91 aa)).

This sequence belongs to the NrdR family. The cofactor is Zn(2+).

Functionally, negatively regulates transcription of bacterial ribonucleotide reductase nrd genes and operons by binding to NrdR-boxes. This Pectobacterium carotovorum subsp. carotovorum (strain PC1) protein is Transcriptional repressor NrdR.